Reading from the N-terminus, the 614-residue chain is DNA mismatch repair protein MutL (614 aa).

The protein belongs to the DNA mismatch repair MutL/HexB family.

Its function is as follows. This protein is involved in the repair of mismatches in DNA. It is required for dam-dependent methyl-directed DNA mismatch repair. May act as a 'molecular matchmaker', a protein that promotes the formation of a stable complex between two or more DNA-binding proteins in an ATP-dependent manner without itself being part of a final effector complex. The protein is DNA mismatch repair protein MutL of Leptospira biflexa serovar Patoc (strain Patoc 1 / ATCC 23582 / Paris).